A 351-amino-acid chain; its full sequence is Selenide, water dikinase (351 aa).

Residue Sec15 is part of the active site. Position 15 (Sec15) is a non-standard amino acid, selenocysteine. ATP contacts are provided by residues Lys18 and 47-49 (DNE). Asp50 contacts Mg(2+). Residues Asp67, Asp90, and 138–140 (GHS) contribute to the ATP site. Residue Asp90 participates in Mg(2+) binding. A Mg(2+)-binding site is contributed by Asp227.

This sequence belongs to the selenophosphate synthase 1 family. Class I subfamily. As to quaternary structure, homodimer. Mg(2+) serves as cofactor.

It catalyses the reaction hydrogenselenide + ATP + H2O = selenophosphate + AMP + phosphate + 2 H(+). Synthesizes selenophosphate from selenide and ATP. This is Selenide, water dikinase from Nitratidesulfovibrio vulgaris (strain ATCC 29579 / DSM 644 / CCUG 34227 / NCIMB 8303 / VKM B-1760 / Hildenborough) (Desulfovibrio vulgaris).